The following is a 123-amino-acid chain: Ribonuclease P protein component 2 (123 aa).

It belongs to the eukaryotic/archaeal RNase P protein component 2 family. In terms of assembly, consists of a catalytic RNA component and at least 4-5 protein subunits.

The protein resides in the cytoplasm. The enzyme catalyses Endonucleolytic cleavage of RNA, removing 5'-extranucleotides from tRNA precursor.. Its function is as follows. Part of ribonuclease P, a protein complex that generates mature tRNA molecules by cleaving their 5'-ends. The polypeptide is Ribonuclease P protein component 2 (Sulfurisphaera tokodaii (strain DSM 16993 / JCM 10545 / NBRC 100140 / 7) (Sulfolobus tokodaii)).